Reading from the N-terminus, the 245-residue chain is Thymidylate kinase (245 aa).

Residue 55-62 (GIDGVGKS) coordinates ATP.

The protein belongs to the thymidylate kinase family.

It catalyses the reaction dTMP + ATP = dTDP + ADP. In terms of biological role, phosphorylation of dTMP to form dTDP in both de novo and salvage pathways of dTTP synthesis. The chain is Thymidylate kinase from Rhodopirellula baltica (strain DSM 10527 / NCIMB 13988 / SH1).